Reading from the N-terminus, the 422-residue chain is 26S proteasome non-ATPase regulatory subunit 11 (422 aa).

Position 2 is an N-acetylalanine (A2). Phosphoserine occurs at positions 14 and 23. Residues 224-392 (DWKTAYSYFY…GVLIIFDEPP (169 aa)) enclose the PCI domain. A Glycyl lysine isopeptide (Lys-Gly) (interchain with G-Cter in SUMO2) cross-link involves residue K274.

This sequence belongs to the proteasome subunit S9 family. As to quaternary structure, component of the 19S proteasome regulatory particle complex. The 26S proteasome consists of a 20S core particle (CP) and two 19S regulatory subunits (RP). The regulatory particle is made of a lid composed of 9 subunits including PSMD11, a base containing 6 ATPases and few additional components.

Its function is as follows. Component of the 26S proteasome, a multiprotein complex involved in the ATP-dependent degradation of ubiquitinated proteins. This complex plays a key role in the maintenance of protein homeostasis by removing misfolded or damaged proteins, which could impair cellular functions, and by removing proteins whose functions are no longer required. Therefore, the proteasome participates in numerous cellular processes, including cell cycle progression, apoptosis, or DNA damage repair. In the complex, PSMD11 is required for proteasome assembly. Plays a key role in increased proteasome activity in embryonic stem cells (ESCs): its high expression in ESCs promotes enhanced assembly of the 26S proteasome, followed by higher proteasome activity. The polypeptide is 26S proteasome non-ATPase regulatory subunit 11 (Psmd11) (Mus musculus (Mouse)).